Reading from the N-terminus, the 126-residue chain is Bleomycin resistance protein (126 aa).

The 119-residue stretch at 1–119 folds into the VOC domain; that stretch reads MTDQATPNLP…DGTLLRLIQN (119 aa).

This sequence belongs to the bleomycin resistance protein family.

In terms of biological role, binding protein with a strong affinity to the bleomycin family of antibiotics. Binds to CL990; an antimitotic-antibiotic compound. The protein is Bleomycin resistance protein (ble) of Klebsiella pneumoniae.